The sequence spans 556 residues: MTSDQRPARLPTHKGKLLAPHRLHRLIPVSVALTTVCAALPSSTAYAADTPPTPHLDAIERSLRDTSPGLEGSVWQRTDGNRLDAPDGDPAGWLLQTPGCWGDAGCKDRAGTRRLLDKMTRNIADARHTVDISSLAPFPNGGFEDAVVDGLKAVVAAGHSPRVRILVGAAPIYHLNVVPSRYRDELIGKLGAAAGKVTLNVASMTTSKTSLSWNHSKLLVVDGKTAITGGINGWKDDYLDTAHPVSDVDMALSGPAAASAGKYLDTLWDWTCRNASDPAKVWLATSNGASCMPSMEQDEAGSAPAEPTGDVPVIAVGGLGVGIKESDPSSGYHPDLPTAPDTKCTVGLHDNTNADRDYDTVNPEENALRSLIASARSHVEISQQDLNATCPPLPRYDIRTYDTLAGKLAAGVKVRIVVSDPANRGAVGSGGYSQIKSLDEISDTLRTRLVALTGDNEKASRALCGNLQLASFRSSDAAKWADGKPYALHHKLVSVDDSAFYIGSKNLYPAWLQDFGYIVESPAAAQQLKTELLDPEWKYSQQAAATPAGCPARQAG.

Residues 1–47 (MTSDQRPARLPTHKGKLLAPHRLHRLIPVSVALTTVCAALPSSTAYA) form the signal peptide. The 28-residue stretch at 210 to 237 (SLSWNHSKLLVVDGKTAITGGINGWKDD) folds into the PLD phosphodiesterase 1 domain. The segment at 326–360 (SDPSSGYHPDLPTAPDTKCTVGLHDNTNADRDYDT) is disordered. The region spanning 484–511 (KPYALHHKLVSVDDSAFYIGSKNLYPAW) is the PLD phosphodiesterase 2 domain.

The protein belongs to the phospholipase D family. Post-translationally, probably has at least 1 disulfide bond.

The protein resides in the secreted. The enzyme catalyses a 1,2-diacyl-sn-glycero-3-phosphocholine + H2O = a 1,2-diacyl-sn-glycero-3-phosphate + choline + H(+). Its activity is regulated as follows. Inhibited by mercaptoethanol and dithiothreitol. Functionally, a reversible phospholipase active on phosphatidylcholine (PC) and phosphatidylethanolamine. Lysophosphatidylcholine and egg sphingomyelin are hydrolyzed about 50 times and 100 times more slowly than PC, respectively. During the transphosphatidylation reaction straight-chain hydroxy compounds, such as triethyleneglycol and triethyleneglycol monomethyl ether, were phosphatidylated in good yield, as were monosaccharides. Disaccharides and sugar alcohol reacted slowly, while N-acetyl-D-galactosamine, D-galactosamine and D-galacturonic acid were not phosphatidylated. The chain is Phospholipase D from Streptomyces antibioticus.